The sequence spans 165 residues: Pyruvoyl-dependent arginine decarboxylase (165 aa).

Ser-53 carries the post-translational modification Pyruvic acid (Ser).

Belongs to the PdaD family. In terms of assembly, trimer of an alpha-beta dimer. Pyruvate is required as a cofactor.

The catalysed reaction is L-arginine + H(+) = agmatine + CO2. In Methanocaldococcus jannaschii (strain ATCC 43067 / DSM 2661 / JAL-1 / JCM 10045 / NBRC 100440) (Methanococcus jannaschii), this protein is Pyruvoyl-dependent arginine decarboxylase (pdaD).